Consider the following 134-residue polypeptide: 6,7-dimethyl-8-ribityllumazine synthase (134 aa).

Residues phenylalanine 12, 44 to 46 (VFD), and 68 to 70 (SVI) contribute to the 5-amino-6-(D-ribitylamino)uracil site. 73-74 (DT) contacts (2S)-2-hydroxy-3-oxobutyl phosphate. Catalysis depends on histidine 76, which acts as the Proton donor. Residue leucine 101 participates in 5-amino-6-(D-ribitylamino)uracil binding. A (2S)-2-hydroxy-3-oxobutyl phosphate-binding site is contributed by arginine 116.

This sequence belongs to the DMRL synthase family.

It carries out the reaction (2S)-2-hydroxy-3-oxobutyl phosphate + 5-amino-6-(D-ribitylamino)uracil = 6,7-dimethyl-8-(1-D-ribityl)lumazine + phosphate + 2 H2O + H(+). It functions in the pathway cofactor biosynthesis; riboflavin biosynthesis; riboflavin from 2-hydroxy-3-oxobutyl phosphate and 5-amino-6-(D-ribitylamino)uracil: step 1/2. Functionally, catalyzes the formation of 6,7-dimethyl-8-ribityllumazine by condensation of 5-amino-6-(D-ribitylamino)uracil with 3,4-dihydroxy-2-butanone 4-phosphate. This is the penultimate step in the biosynthesis of riboflavin. In Methanosarcina barkeri (strain Fusaro / DSM 804), this protein is 6,7-dimethyl-8-ribityllumazine synthase.